The following is a 469-amino-acid chain: Argininosuccinate lyase (469 aa).

This sequence belongs to the lyase 1 family. Argininosuccinate lyase subfamily.

Its subcellular location is the cytoplasm. The catalysed reaction is 2-(N(omega)-L-arginino)succinate = fumarate + L-arginine. The protein operates within amino-acid biosynthesis; L-arginine biosynthesis; L-arginine from L-ornithine and carbamoyl phosphate: step 3/3. The protein is Argininosuccinate lyase of Burkholderia lata (strain ATCC 17760 / DSM 23089 / LMG 22485 / NCIMB 9086 / R18194 / 383).